Consider the following 317-residue polypeptide: Testis-expressed protein 19.2 (317 aa).

Acidic residues predominate over residues 64–75 (MELSEASSEPEE). Residues 64-113 (MELSEASSEPEEWPGLSGGEGQGHLPHGISVSAGSGAQGPQPVPTELGPQ) are disordered. An important for interaction with piRNA region spans residues 101 to 145 (QGPQPVPTELGPQEAVPLDLGPEDAEWTQALPWRFDGLSPCSHWL).

Interacts with UBR2. Interacts with piRNA-associated proteins DDX4, EDC4, MAEL, PIWIL1, PIWIL2, RANBP9 and TDRD6. As to expression, specifically expressed in somatic cells of male gonad lineage.

It is found in the cytoplasm. In terms of biological role, may be required during spermatogenesis, probably by participating in the repression of retrotransposable elements and prevent their mobilization. With its paralog, Tex19.1, collaborates with the Piwi-interacting RNA (piRNA) pathway, which mediates the repression of transposable elements during meiosis by forming complexes composed of piRNAs and Piwi proteins. Interacts with Piwi proteins and directly binds piRNAs, a class of 24 to 30 nucleotide RNAs that are generated by a Dicer-independent mechanism and are primarily derived from transposons and other repeated sequence elements. This chain is Testis-expressed protein 19.2 (Tex19.2), found in Mus musculus (Mouse).